Reading from the N-terminus, the 256-residue chain is Spore coat polysaccharide biosynthesis protein SpsA (256 aa).

Cys155 and Cys243 are disulfide-bonded. Residue Asp191 is part of the active site.

Belongs to the glycosyltransferase 2 family. As to quaternary structure, monomer in solution.

The protein operates within spore coat biogenesis; spore coat polysaccharide biosynthesis. In terms of biological role, glycosyltransferase implicated in the synthesis of the spore coat. The chain is Spore coat polysaccharide biosynthesis protein SpsA (spsA) from Bacillus subtilis (strain 168).